Reading from the N-terminus, the 918-residue chain is Inner centromere protein (918 aa).

The disordered stretch occupies residues 48–105 (EFSKEPELMPKTPSQKNRRKKRRISYVQDENRDPIRRRLSRRKSRSSQLSSRRLRSKD). Residues S72, S119, S143, and S148 each carry the phosphoserine modification. Residues 124–248 (VTRAAAAAAA…TPQDPKGQGV (125 aa)) are interaction with CBX5. The disordered stretch occupies residues 138 to 159 (LAAPSSPTPESPTMLTKKPEDN). T150 bears the Phosphothreonine mark. Residues 167–171 (PVVEI) carry the PXVXL/I motif motif. The segment at 190–253 (EPLPRTLSPT…KGQGVGTGRS (64 aa)) is disordered. Position 195 is a phosphothreonine (T195). At S197 the chain carries Phosphoserine. Low complexity predominate over residues 197-208 (SPTPASATAPTS). 2 positions are modified to phosphothreonine: T199 and T213. S214 carries the post-translational modification Phosphoserine. Phosphothreonine is present on residues T219 and T239. Phosphoserine occurs at positions 263, 269, and 275. Residues 285 to 316 (ILPDNFSTPTGSRTDSQSVRHSPIAPSSPSPQ) form a disordered region. The segment covering 289-316 (NFSTPTGSRTDSQSVRHSPIAPSSPSPQ) has biased composition (polar residues). T292 carries the phosphothreonine modification. A phosphoserine mark is found at S296, S306, S312, S314, and S330. The segment at 371–489 (VGSEQKEPPE…SSPCPASKVV (119 aa)) is disordered. A compositionally biased stretch (low complexity) spans 384-394 (PVAAAEPEVPE). 2 stretches are compositionally biased toward polar residues: residues 395-413 (NNGNNSWPHNDTEIANSTP) and 421-431 (SPETPSAGQQE). S400 carries the post-translational modification Phosphoserine. A Phosphothreonine modification is found at T406. The span at 432–441 (AKTDQADGPR) shows a compositional bias: basic and acidic residues. S446 is modified (phosphoserine). Residues 459–471 (ELDEEQHLEDEEL) show a composition bias toward acidic residues. At S476 the chain carries Phosphoserine. T478 bears the Phosphothreonine mark. Phosphoserine is present on residues S480, S510, and S514. Residues 531 to 765 (KCSFVEKERQ…EEKKKKEEQQ (235 aa)) form an SAH region. Basic and acidic residues-rich tracts occupy residues 607 to 623 (DEKTEKAKEERLAEEKA) and 630 to 640 (KKMEEVEARRK). Disordered stretches follow at residues 607–640 (DEKTEKAKEERLAEEKAKKKAAAKKMEEVEARRK), 660–740 (HQEL…LQER), 754–787 (ELEEKKKKEEQQRLAERQLQEEQEKKAKEAAGAS), and 826–845 (LNSDDSTDDEAHPRKPIPTW). Positions 754–782 (ELEEKKKKEEQQRLAERQLQEEQEKKAKE) are enriched in basic and acidic residues. The segment at 822–897 (YGMDLNSDDS…YHKRTSSAVW (76 aa)) is interaction with AURKC. Residues 826 to 900 (LNSDDSTDDE…RTSSAVWNSP (75 aa)) are IN box. S828 and S831 each carry phosphoserine. At T832 the chain carries Phosphothreonine. The residue at position 892 (T892) is a Phosphothreonine; by AURKB and AURKC. S893 and S894 each carry phosphoserine; by AURKB and AURKC. 2 positions are modified to phosphoserine: S899 and S914.

This sequence belongs to the INCENP family. Component of the chromosomal passenger complex (CPC) composed of at least BIRC5/survivin, CDCA8/borealin, INCENP, AURKB or AURKC; in the complex binds directly to AURKB or AURKC via the IN box, and forms a triple-helix bundle-based subcomplex with BIRC5 and CDCA8 via its N-terminus. The reported homodimerization is questioned as the SAH domain is shown to be monomeric. Interacts with H2AZ1. Interacts with CBX1 and CBX3. Interacts with tubulin beta chain. Interacts with EVI5. Interacts with CBX5; POGZ and INCENP compete for interaction with CBX5; regulates INCENP (and probably CPC) localization to centromeres in interphase and not required for proper mitotic progression or sister chromatid cohesion. Interacts with POGZ. Interacts with JTB. In terms of processing, phosphorylation by AURKB or AURKC at its C-terminal part is important for AURKB or AURKC activation by INCENP.

The protein resides in the nucleus. The protein localises to the chromosome. It localises to the centromere. It is found in the cytoplasm. Its subcellular location is the cytoskeleton. The protein resides in the spindle. The protein localises to the midbody. It localises to the kinetochore. Functionally, component of the chromosomal passenger complex (CPC), a complex that acts as a key regulator of mitosis. The CPC complex has essential functions at the centromere in ensuring correct chromosome alignment and segregation and is required for chromatin-induced microtubule stabilization and spindle assembly. Acts as a scaffold regulating CPC localization and activity. The C-terminus associates with AURKB or AURKC, the N-terminus associated with BIRC5/survivin and CDCA8/borealin tethers the CPC to the inner centromere, and the microtubule binding activity within the central SAH domain directs AURKB/C toward substrates near microtubules. The flexibility of the SAH domain is proposed to allow AURKB/C to follow substrates on dynamic microtubules while ensuring CPC docking to static chromatin. Activates AURKB and AURKC. Required for localization of CBX5 to mitotic centromeres. Controls the kinetochore localization of BUB1. This chain is Inner centromere protein (INCENP), found in Homo sapiens (Human).